The primary structure comprises 197 residues: NADH-quinone oxidoreductase subunit C (197 aa).

This sequence belongs to the complex I 30 kDa subunit family. NDH-1 is composed of 14 different subunits. Subunits NuoB, C, D, E, F, and G constitute the peripheral sector of the complex.

The protein localises to the cell inner membrane. The enzyme catalyses a quinone + NADH + 5 H(+)(in) = a quinol + NAD(+) + 4 H(+)(out). In terms of biological role, NDH-1 shuttles electrons from NADH, via FMN and iron-sulfur (Fe-S) centers, to quinones in the respiratory chain. The immediate electron acceptor for the enzyme in this species is believed to be ubiquinone. Couples the redox reaction to proton translocation (for every two electrons transferred, four hydrogen ions are translocated across the cytoplasmic membrane), and thus conserves the redox energy in a proton gradient. This is NADH-quinone oxidoreductase subunit C from Neisseria meningitidis serogroup A / serotype 4A (strain DSM 15465 / Z2491).